Reading from the N-terminus, the 329-residue chain is Glycerol-3-phosphate dehydrogenase [NAD(P)+] (329 aa).

Tryptophan 15, histidine 35, and lysine 107 together coordinate NADPH. Sn-glycerol 3-phosphate-binding residues include lysine 107, glycine 135, and serine 137. Alanine 139 is an NADPH binding site. Residues lysine 190, aspartate 243, serine 253, arginine 254, and asparagine 255 each contribute to the sn-glycerol 3-phosphate site. Lysine 190 serves as the catalytic Proton acceptor. Residue arginine 254 coordinates NADPH. Residues leucine 276 and glutamate 278 each contribute to the NADPH site.

This sequence belongs to the NAD-dependent glycerol-3-phosphate dehydrogenase family.

It is found in the cytoplasm. The enzyme catalyses sn-glycerol 3-phosphate + NAD(+) = dihydroxyacetone phosphate + NADH + H(+). The catalysed reaction is sn-glycerol 3-phosphate + NADP(+) = dihydroxyacetone phosphate + NADPH + H(+). Its pathway is membrane lipid metabolism; glycerophospholipid metabolism. Catalyzes the reduction of the glycolytic intermediate dihydroxyacetone phosphate (DHAP) to sn-glycerol 3-phosphate (G3P), the key precursor for phospholipid synthesis. This is Glycerol-3-phosphate dehydrogenase [NAD(P)+] from Rhodopseudomonas palustris (strain HaA2).